A 380-amino-acid chain; its full sequence is SAM and SH3 domain-containing protein 3 (380 aa).

Disordered regions lie at residues 1 to 76 (MLRR…GKKW) and 96 to 168 (LSEE…SPAP). The span at 22–41 (LQRSSSFKDFAKSKPSSPVV) shows a compositional bias: low complexity. Residues S27, S34, and S42 each carry the phosphoserine modification. T61 bears the Phosphothreonine mark. A Phosphoserine modification is found at S97. Phosphothreonine is present on T103. S110 is modified (phosphoserine). T112 is modified (phosphothreonine). 2 positions are modified to phosphoserine: S113 and S120. Over residues 141-150 (LSRQTSTGSE) the composition is skewed to polar residues. The 62-residue stretch at 173–234 (PFCGRARVHT…KFIYVDVLPE (62 aa)) folds into the SH3 domain. One can recognise an SAM domain in the interval 252 to 316 (PKPKTLHELL…LTAAELLLDY (65 aa)). T318 is modified (phosphothreonine). The segment covering 318-327 (TGSEEAEEGA) has biased composition (acidic residues). Residues 318–380 (TGSEEAEEGA…LQGLSLSGAP (63 aa)) form a disordered region. S320 is subject to Phosphoserine. Over residues 369–380 (EQLQGLSLSGAP) the composition is skewed to polar residues.

As to expression, preferentially expressed in lymphoid tissues. Expressed in bone marrow, thymus, spleen, lymph nodes and Peyer patches of gut. In the spleen and lymph nodes, expressed in both T- and B-cells. In the thymus, in the medulla and cortex.

In terms of biological role, may function as a signaling adapter protein in lymphocytes. This chain is SAM and SH3 domain-containing protein 3 (Sash3), found in Mus musculus (Mouse).